The primary structure comprises 274 residues: Large ribosomal subunit protein uL2 (274 aa).

The disordered stretch occupies residues 223-274 (VAMNPVDHPHGGGEGRTSGGRHPVTPWGVPTKGYKTRSNKRTDKYIVRRRTK).

Belongs to the universal ribosomal protein uL2 family. Part of the 50S ribosomal subunit. Forms a bridge to the 30S subunit in the 70S ribosome.

One of the primary rRNA binding proteins. Required for association of the 30S and 50S subunits to form the 70S ribosome, for tRNA binding and peptide bond formation. It has been suggested to have peptidyltransferase activity; this is somewhat controversial. Makes several contacts with the 16S rRNA in the 70S ribosome. The sequence is that of Large ribosomal subunit protein uL2 from Shewanella amazonensis (strain ATCC BAA-1098 / SB2B).